A 123-amino-acid polypeptide reads, in one-letter code: MLPLKFHEGGLIPVIVQDQKTREVLMMAYANEEAVRLTESTGSAHYYSRSRKKIWKKGEESGHFQKVGRILVDCDEDCLIYEVEQTGAACHTGYRTCFYRTLDGVTIGEKIFDPEKVYGKTGH.

Asp73 contacts Mg(2+). Cys74 is a binding site for Zn(2+). Mg(2+) contacts are provided by Asp75 and Asp77. Residues Cys90 and Cys97 each contribute to the Zn(2+) site.

The protein belongs to the PRA-CH family. As to quaternary structure, homodimer. Requires Mg(2+) as cofactor. The cofactor is Zn(2+).

It is found in the cytoplasm. It catalyses the reaction 1-(5-phospho-beta-D-ribosyl)-5'-AMP + H2O = 1-(5-phospho-beta-D-ribosyl)-5-[(5-phospho-beta-D-ribosylamino)methylideneamino]imidazole-4-carboxamide. It participates in amino-acid biosynthesis; L-histidine biosynthesis; L-histidine from 5-phospho-alpha-D-ribose 1-diphosphate: step 3/9. Its function is as follows. Catalyzes the hydrolysis of the adenine ring of phosphoribosyl-AMP. In Methanoregula boonei (strain DSM 21154 / JCM 14090 / 6A8), this protein is Phosphoribosyl-AMP cyclohydrolase.